The sequence spans 447 residues: Zinc finger protein ZIC 1 (447 aa).

The C2H2-type 1; atypical zinc finger occupies 225 to 260 (LICKWIEPEQLANPKKSCNKTFSTMHELVTHVTVEH). The segment at 269–296 (HICFWEECPREGKPFKAKYKLVNHIRVH) adopts a C2H2-type 2; atypical zinc-finger fold. 3 consecutive C2H2-type zinc fingers follow at residues 302–326 (FPCPFPGCGKVFARSENLKIHKRTH), 332–356 (FKCEFEGCDRRFANSSDRKKHMHVH), and 362–384 (YLCKMCDKSYTHPSSLRKHMKVH). Residues 375 to 434 (SSLRKHMKVHESSSQGSQPSPAASSGYESSTPPTIVSPTTDNPTTSSMSPSSSAVHHTAG) form a disordered region. Residues 386 to 427 (SSSQGSQPSPAASSGYESSTPPTIVSPTTDNPTTSSMSPSSS) show a composition bias toward low complexity.

This sequence belongs to the GLI C2H2-type zinc-finger protein family. In terms of assembly, interacts (via the C2H2-type domains 3, 4 and 5) with MDFIC (via the C2H2-type domains 3, 4 and 5). Interacts with GLI1; the interaction enhances transcription activation. Interacts with GLI2. Interacts with GLI3; the interaction enhances transcription activation. In terms of tissue distribution, expressed in osteoblasts (at protein level). Expressed in the CNS. A high level expression is seen in the cerebellum, while a low level expression is seen in the olfactory bulb, diencephalon, and brainstem. Expressed in lumbar spine and iliac crest.

The protein resides in the nucleus. It is found in the cytoplasm. In terms of biological role, acts as a transcriptional activator. Involved in neurogenesis. Plays important roles in the early stage of organogenesis of the CNS, as well as during dorsal spinal cord development and maturation of the cerebellum. Involved in the spatial distribution of mossy fiber (MF) neurons within the pontine gray nucleus (PGN). Plays a role in the regulation of MF axon pathway choice. Promotes MF migration towards ipsilaterally-located cerebellar territories. May have a role in shear flow mechanotransduction in osteocytes. Retains nuclear GLI1 and GLI3 in the cytoplasm. Binds to the minimal GLI-consensus sequence 5'-TGGGTGGTC-3'. The sequence is that of Zinc finger protein ZIC 1 (Zic1) from Mus musculus (Mouse).